A 247-amino-acid chain; its full sequence is Flagellar brake protein YcgR 2 (247 aa).

In terms of domain architecture, PilZ spans 124 to 237 (QRREYFRVET…DETRIQRYIA (114 aa)).

This sequence belongs to the YcgR family. Monomer. Interacts with the flagellar basal bodies.

It is found in the bacterial flagellum basal body. Functionally, acts as a flagellar brake, regulating swimming and swarming in a bis-(3'-5') cyclic diguanylic acid (c-di-GMP)-dependent manner. Binds 1 c-di-GMP dimer per subunit. Increasing levels of c-di-GMP lead to decreased motility. The protein is Flagellar brake protein YcgR 2 of Dechloromonas aromatica (strain RCB).